The following is a 376-amino-acid chain: Erythronate-4-phosphate dehydrogenase (376 aa).

Positions 45 and 67 each coordinate substrate. Asp-147 serves as a coordination point for NAD(+). The active site involves Arg-209. Position 233 (Asp-233) interacts with NAD(+). Glu-238 is a catalytic residue. His-255 serves as the catalytic Proton donor. Gly-258 contributes to the NAD(+) binding site. Substrate is bound at residue Tyr-259.

It belongs to the D-isomer specific 2-hydroxyacid dehydrogenase family. PdxB subfamily. As to quaternary structure, homodimer.

The protein localises to the cytoplasm. It carries out the reaction 4-phospho-D-erythronate + NAD(+) = (R)-3-hydroxy-2-oxo-4-phosphooxybutanoate + NADH + H(+). Its pathway is cofactor biosynthesis; pyridoxine 5'-phosphate biosynthesis; pyridoxine 5'-phosphate from D-erythrose 4-phosphate: step 2/5. Functionally, catalyzes the oxidation of erythronate-4-phosphate to 3-hydroxy-2-oxo-4-phosphonooxybutanoate. In Shewanella halifaxensis (strain HAW-EB4), this protein is Erythronate-4-phosphate dehydrogenase.